The sequence spans 173 residues: NADH-ubiquinone oxidoreductase chain 6 (173 aa).

Helical transmembrane passes span methionine 1–serine 21, tyrosine 27–glycine 47, valine 48–valine 68, valine 87–phenylalanine 107, and cysteine 139–leucine 159.

It belongs to the complex I subunit 6 family.

It localises to the mitochondrion membrane. It carries out the reaction a ubiquinone + NADH + 5 H(+)(in) = a ubiquinol + NAD(+) + 4 H(+)(out). Core subunit of the mitochondrial membrane respiratory chain NADH dehydrogenase (Complex I) that is believed to belong to the minimal assembly required for catalysis. Complex I functions in the transfer of electrons from NADH to the respiratory chain. The immediate electron acceptor for the enzyme is believed to be ubiquinone. This Cepphus columba (Pigeon guillemot) protein is NADH-ubiquinone oxidoreductase chain 6 (MT-ND6).